Reading from the N-terminus, the 503-residue chain is MRWFINYKPCLLIILIFNSVILLFILIRKSSQPFSNILTDPSGTSREKLPVSHAFINSVYYYPTSKSLGENALAFTMAIDQHSYSMKNHTFTVLGYNSTDSVESIATSQTEGISRCRYVTMMARTNTVENLEKLKIESQGVSVEVPFRIARYSAPKPVIICISPQFAAEQWQMFVMHVHAANRFGGHLHIYLTSIIESYFQLMQEYERQGYITLDYWLRMKFSNTKTPYYEPNENVEWRHQAGAQTDCLLQYKEAAEYIAFFDMDDILFPKNYPTYLEEFNSVLAANPGKNYLFYGRREHEFVKASTLTEFSFTELVQSLRSSQTVKRGKVVVRPEAYNSTWIHNSKHVSFETSVQVKSPTLVHVQLPVDKNGKRNDSRDLWKIKFGPLNETIREDDIRAIEDDINRIKNLAVISSIGPFLPSSDFYLPIVFKCYFDSFYKDTFVTKIGVRRCPNADICDLPQREDYKCIHSDAQYYSGPDMQPVTYHFTTDSFWSKDIGCYQ.

Residues 7–27 (YKPCLLIILIFNSVILLFILI) form a helical membrane-spanning segment. The GT92 domain occupies 156-441 (KPVIICISPQ…FKCYFDSFYK (286 aa)).

Belongs to the glycosyltransferase 92 family.

It is found in the membrane. In Caenorhabditis elegans, this protein is Glycosyltransferase family 92 protein ZK381.2.